Here is a 221-residue protein sequence, read N- to C-terminus: Large ribosomal subunit protein uL4 (221 aa).

The tract at residues 44-102 is disordered; the sequence is AARQGTHKVKRRGEVRGGGKKPYRQKGTGRARQGSTRAPQFAGGGVVHGPTPRDYSQRT. Residues 61-72 show a composition bias toward basic residues; that stretch reads GGKKPYRQKGTG.

It belongs to the universal ribosomal protein uL4 family. As to quaternary structure, part of the 50S ribosomal subunit.

Its function is as follows. One of the primary rRNA binding proteins, this protein initially binds near the 5'-end of the 23S rRNA. It is important during the early stages of 50S assembly. It makes multiple contacts with different domains of the 23S rRNA in the assembled 50S subunit and ribosome. In terms of biological role, forms part of the polypeptide exit tunnel. The sequence is that of Large ribosomal subunit protein uL4 from Streptomyces avermitilis (strain ATCC 31267 / DSM 46492 / JCM 5070 / NBRC 14893 / NCIMB 12804 / NRRL 8165 / MA-4680).